A 109-amino-acid polypeptide reads, in one-letter code: DNA-binding protein Mpal_0536 (109 aa).

The segment at 14–35 (MAQLQSQQMDQQQMDEEKQRAK) is disordered. Positions 16–25 (QLQSQQMDQQ) are enriched in low complexity.

The protein belongs to the PDCD5 family.

This chain is DNA-binding protein Mpal_0536, found in Methanosphaerula palustris (strain ATCC BAA-1556 / DSM 19958 / E1-9c).